The primary structure comprises 101 residues: NADH-quinone oxidoreductase subunit K (101 aa).

3 consecutive transmembrane segments (helical) span residues 4–24 (LSHY…GIFI), 30–50 (IVIL…LVAF), and 65–85 (FVLT…VVFF).

Belongs to the complex I subunit 4L family. In terms of assembly, NDH-1 is composed of 14 different subunits. Subunits NuoA, H, J, K, L, M, N constitute the membrane sector of the complex.

It is found in the cell inner membrane. It catalyses the reaction a quinone + NADH + 5 H(+)(in) = a quinol + NAD(+) + 4 H(+)(out). Its function is as follows. NDH-1 shuttles electrons from NADH, via FMN and iron-sulfur (Fe-S) centers, to quinones in the respiratory chain. The immediate electron acceptor for the enzyme in this species is believed to be ubiquinone. Couples the redox reaction to proton translocation (for every two electrons transferred, four hydrogen ions are translocated across the cytoplasmic membrane), and thus conserves the redox energy in a proton gradient. The chain is NADH-quinone oxidoreductase subunit K from Methylobacterium sp. (strain 4-46).